A 113-amino-acid chain; its full sequence is Large ribosomal subunit protein uL22 (113 aa).

Belongs to the universal ribosomal protein uL22 family. Part of the 50S ribosomal subunit.

This protein binds specifically to 23S rRNA; its binding is stimulated by other ribosomal proteins, e.g. L4, L17, and L20. It is important during the early stages of 50S assembly. It makes multiple contacts with different domains of the 23S rRNA in the assembled 50S subunit and ribosome. In terms of biological role, the globular domain of the protein is located near the polypeptide exit tunnel on the outside of the subunit, while an extended beta-hairpin is found that lines the wall of the exit tunnel in the center of the 70S ribosome. In Bacillus thuringiensis subsp. konkukian (strain 97-27), this protein is Large ribosomal subunit protein uL22.